The following is a 301-amino-acid chain: GLABROUS1 enhancer-binding protein-like 2 (301 aa).

Residues 1–62 form a disordered region; it reads MATPTELGFS…NTKMASPPSN (62 aa). The span at 44 to 54 shows a compositional bias: basic residues; sequence KKKKKKTKHNT. Residues 268–289 are non-canonical leucine-zipper; it reads LSNEWKALCVEELKLNINKLRF.

The protein belongs to the GeBP family. In terms of assembly, homo- and heterodimers. Interacts with GEBP, GPL1 and GPL3. As to expression, expressed in the apical meristem and young leaf primordia. Detected in the vascular tissues of cotyledons and leaves, in hydathodes and in the septun of siliques, but not in roots.

Its subcellular location is the nucleus. Probable transcription factor. May play redundant roles with GEBP and GPL1 in cytokinin responses by regulating the transcript levels of type-A ARR response genes. Involved in stress responses. Plays a repressive role in cell expansion by counteracting the positive role of CPR5 in this process, but does not regulate cell proliferation or endoreduplication. This chain is GLABROUS1 enhancer-binding protein-like 2, found in Arabidopsis thaliana (Mouse-ear cress).